An 851-amino-acid polypeptide reads, in one-letter code: Probable alpha,alpha-trehalose-phosphate synthase [UDP-forming] 7 (851 aa).

Ser-5 is subject to Phosphoserine. Phosphothreonine is present on Thr-32. Residues 59-540 form a glycosyltransferase region; that stretch reads DRMIIVANRL…SRSFLQDLER (482 aa).

In the N-terminal section; belongs to the glycosyltransferase 20 family. It in the C-terminal section; belongs to the trehalose phosphatase family. As to quaternary structure, binds to the phosphopeptide-binding site of GRF/14-3-3. Post-translationally, phosphorylated. As to expression, expressed in seedlings, leaves, roots, stems, flowers and siliques.

It catalyses the reaction D-glucose 6-phosphate + UDP-alpha-D-glucose = alpha,alpha-trehalose 6-phosphate + UDP + H(+). This is Probable alpha,alpha-trehalose-phosphate synthase [UDP-forming] 7 (TPS7) from Arabidopsis thaliana (Mouse-ear cress).